The sequence spans 253 residues: GTP cyclohydrolase III 2 (253 aa).

A disordered region spans residues 102 to 125 (LRDAGSAQDENRQEALSHRSPPGF).

This sequence belongs to the archaeal-type GTP cyclohydrolase family.

The enzyme catalyses GTP + 3 H2O = 2-amino-5-formylamino-6-(5-phospho-D-ribosylamino)pyrimidin-4(3H)-one + 2 phosphate + 2 H(+). Functionally, catalyzes the formation of 2-amino-5-formylamino-6-ribofuranosylamino-4(3H)-pyrimidinone ribonucleotide monophosphate and inorganic phosphate from GTP. Also has an independent pyrophosphate phosphohydrolase activity. The protein is GTP cyclohydrolase III 2 (gch32) of Halobacterium salinarum (strain ATCC 700922 / JCM 11081 / NRC-1) (Halobacterium halobium).